A 349-amino-acid chain; its full sequence is Aspartate-semialdehyde dehydrogenase (349 aa).

NADP(+) is bound by residues 12 to 15 (TGSV) and 39 to 40 (NS). Residue arginine 113 coordinates phosphate. Cysteine 148 acts as the Acyl-thioester intermediate in catalysis. Glutamine 175 provides a ligand contact to substrate. 178 to 179 (SG) contacts NADP(+). Glutamate 201 lines the substrate pocket. Residue lysine 204 participates in phosphate binding. Arginine 234 is a substrate binding site. Histidine 241 acts as the Proton acceptor in catalysis. 326 to 327 (NT) contacts NADP(+).

Belongs to the aspartate-semialdehyde dehydrogenase family. In terms of assembly, homodimer.

The enzyme catalyses L-aspartate 4-semialdehyde + phosphate + NADP(+) = 4-phospho-L-aspartate + NADPH + H(+). The protein operates within amino-acid biosynthesis; L-lysine biosynthesis via DAP pathway; (S)-tetrahydrodipicolinate from L-aspartate: step 2/4. It functions in the pathway amino-acid biosynthesis; L-methionine biosynthesis via de novo pathway; L-homoserine from L-aspartate: step 2/3. It participates in amino-acid biosynthesis; L-threonine biosynthesis; L-threonine from L-aspartate: step 2/5. In terms of biological role, catalyzes the NADPH-dependent formation of L-aspartate-semialdehyde (L-ASA) by the reductive dephosphorylation of L-aspartyl-4-phosphate. This is Aspartate-semialdehyde dehydrogenase from Leptospira interrogans serogroup Icterohaemorrhagiae serovar copenhageni (strain Fiocruz L1-130).